Reading from the N-terminus, the 362-residue chain is Phosphoserine aminotransferase (362 aa).

Residue Arg-43 coordinates L-glutamate. Pyridoxal 5'-phosphate contacts are provided by residues 77–78 (AS), Trp-103, Thr-153, Asp-173, and Gln-196. An N6-(pyridoxal phosphate)lysine modification is found at Lys-197. Pyridoxal 5'-phosphate is bound at residue 238–239 (NT).

Belongs to the class-V pyridoxal-phosphate-dependent aminotransferase family. SerC subfamily. Homodimer. Requires pyridoxal 5'-phosphate as cofactor.

It localises to the cytoplasm. It carries out the reaction O-phospho-L-serine + 2-oxoglutarate = 3-phosphooxypyruvate + L-glutamate. The catalysed reaction is 4-(phosphooxy)-L-threonine + 2-oxoglutarate = (R)-3-hydroxy-2-oxo-4-phosphooxybutanoate + L-glutamate. It participates in amino-acid biosynthesis; L-serine biosynthesis; L-serine from 3-phospho-D-glycerate: step 2/3. It functions in the pathway cofactor biosynthesis; pyridoxine 5'-phosphate biosynthesis; pyridoxine 5'-phosphate from D-erythrose 4-phosphate: step 3/5. Its function is as follows. Catalyzes the reversible conversion of 3-phosphohydroxypyruvate to phosphoserine and of 3-hydroxy-2-oxo-4-phosphonooxybutanoate to phosphohydroxythreonine. The chain is Phosphoserine aminotransferase (serC) from Niallia circulans (Bacillus circulans).